A 257-amino-acid chain; its full sequence is Small ribosomal subunit protein uS15m (257 aa).

The transit peptide at 1–57 directs the protein to the mitochondrion; the sequence is MLRAAWRALSSVRVQAVTQAPVPALRARSSASLPSARCGLQTPSLLNAARAYAVQKP. The interval 228 to 257 is disordered; the sequence is KAAAAAAKKEKRERVPENPSNALPEKTKEN. The span at 234-243 shows a compositional bias: basic and acidic residues; the sequence is AKKEKRERVP.

It belongs to the universal ribosomal protein uS15 family. As to quaternary structure, component of the mitochondrial ribosome small subunit (28S) which comprises a 12S rRNA and about 30 distinct proteins. Interacts with METTL17.

It is found in the mitochondrion matrix. The protein is Small ribosomal subunit protein uS15m (Mrps15) of Rattus norvegicus (Rat).